The sequence spans 291 residues: N-acetylmannosamine kinase (291 aa).

Residues 5-12 (AIDIGGTK) and 132-139 (GVGGGVVS) contribute to the ATP site. Zn(2+) contacts are provided by His-156, Cys-166, Cys-168, and Cys-173.

The protein belongs to the ROK (NagC/XylR) family. NanK subfamily. As to quaternary structure, homodimer.

The catalysed reaction is an N-acyl-D-mannosamine + ATP = an N-acyl-D-mannosamine 6-phosphate + ADP + H(+). It functions in the pathway amino-sugar metabolism; N-acetylneuraminate degradation; D-fructose 6-phosphate from N-acetylneuraminate: step 2/5. Catalyzes the phosphorylation of N-acetylmannosamine (ManNAc) to ManNAc-6-P. The chain is N-acetylmannosamine kinase from Shigella boydii serotype 18 (strain CDC 3083-94 / BS512).